The following is a 106-amino-acid chain: Large ribosomal subunit protein bL21 (106 aa).

The protein belongs to the bacterial ribosomal protein bL21 family. In terms of assembly, part of the 50S ribosomal subunit. Contacts protein L20.

Its function is as follows. This protein binds to 23S rRNA in the presence of protein L20. The polypeptide is Large ribosomal subunit protein bL21 (Chlamydia abortus (strain DSM 27085 / S26/3) (Chlamydophila abortus)).